We begin with the raw amino-acid sequence, 345 residues long: Phosphate acyltransferase (345 aa).

It belongs to the PlsX family. In terms of assembly, homodimer. Probably interacts with PlsY.

The protein localises to the cytoplasm. It carries out the reaction a fatty acyl-[ACP] + phosphate = an acyl phosphate + holo-[ACP]. Its pathway is lipid metabolism; phospholipid metabolism. Catalyzes the reversible formation of acyl-phosphate (acyl-PO(4)) from acyl-[acyl-carrier-protein] (acyl-ACP). This enzyme utilizes acyl-ACP as fatty acyl donor, but not acyl-CoA. In Wolbachia sp. subsp. Drosophila simulans (strain wRi), this protein is Phosphate acyltransferase.